The following is a 373-amino-acid chain: tRNA-specific 2-thiouridylase MnmA (373 aa).

ATP is bound by residues 12-19 (GMSGGVDS) and methionine 38. An interaction with target base in tRNA region spans residues 98 to 100 (NPD). The active-site Nucleophile is the cysteine 103. Cysteine 103 and cysteine 200 are disulfide-bonded. Glycine 128 provides a ligand contact to ATP. The tract at residues 150-152 (KDQ) is interaction with tRNA. Cysteine 200 (cysteine persulfide intermediate) is an active-site residue. Residues 312 to 313 (RY) form an interaction with tRNA region.

The protein belongs to the MnmA/TRMU family. As to quaternary structure, interacts with TusE.

It localises to the cytoplasm. The enzyme catalyses S-sulfanyl-L-cysteinyl-[protein] + uridine(34) in tRNA + AH2 + ATP = 2-thiouridine(34) in tRNA + L-cysteinyl-[protein] + A + AMP + diphosphate + H(+). Its function is as follows. Catalyzes the 2-thiolation of uridine at the wobble position (U34) of tRNA(Lys), tRNA(Glu) and tRNA(Gln), leading to the formation of s(2)U34, the first step of tRNA-mnm(5)s(2)U34 synthesis. Sulfur is provided by IscS, via a sulfur-relay system. Binds ATP and its substrate tRNAs. The polypeptide is tRNA-specific 2-thiouridylase MnmA (Yersinia enterocolitica serotype O:8 / biotype 1B (strain NCTC 13174 / 8081)).